A 342-amino-acid chain; its full sequence is Ribosomal RNA small subunit methyltransferase C (342 aa).

Belongs to the methyltransferase superfamily. RsmC family. As to quaternary structure, monomer.

It localises to the cytoplasm. The enzyme catalyses guanosine(1207) in 16S rRNA + S-adenosyl-L-methionine = N(2)-methylguanosine(1207) in 16S rRNA + S-adenosyl-L-homocysteine + H(+). Specifically methylates the guanine in position 1207 of 16S rRNA in the 30S particle. This chain is Ribosomal RNA small subunit methyltransferase C, found in Salmonella agona (strain SL483).